The chain runs to 692 residues: Elongation factor G (692 aa).

The 275-residue stretch at 9 to 283 folds into the tr-type G domain; sequence DKLRNIGIMA…AVIDYLPSPL (275 aa). GTP is bound by residues 18 to 25, 82 to 86, and 136 to 139; these read AHIDAGKT, DTPGH, and NKMD.

This sequence belongs to the TRAFAC class translation factor GTPase superfamily. Classic translation factor GTPase family. EF-G/EF-2 subfamily.

Its subcellular location is the cytoplasm. Its function is as follows. Catalyzes the GTP-dependent ribosomal translocation step during translation elongation. During this step, the ribosome changes from the pre-translocational (PRE) to the post-translocational (POST) state as the newly formed A-site-bound peptidyl-tRNA and P-site-bound deacylated tRNA move to the P and E sites, respectively. Catalyzes the coordinated movement of the two tRNA molecules, the mRNA and conformational changes in the ribosome. The polypeptide is Elongation factor G (fusA) (Thermotoga maritima (strain ATCC 43589 / DSM 3109 / JCM 10099 / NBRC 100826 / MSB8)).